We begin with the raw amino-acid sequence, 161 residues long: Phosphopantetheine adenylyltransferase (161 aa).

Ser-11 is a substrate binding site. ATP is bound by residues 11–12 (SF) and His-19. Residues Lys-43, Leu-75, and Arg-89 each coordinate substrate. ATP-binding positions include 90-92 (GLR), Glu-100, and 125-131 (YSYLSSS).

This sequence belongs to the bacterial CoaD family. As to quaternary structure, homohexamer. It depends on Mg(2+) as a cofactor.

It is found in the cytoplasm. It catalyses the reaction (R)-4'-phosphopantetheine + ATP + H(+) = 3'-dephospho-CoA + diphosphate. Its pathway is cofactor biosynthesis; coenzyme A biosynthesis; CoA from (R)-pantothenate: step 4/5. Reversibly transfers an adenylyl group from ATP to 4'-phosphopantetheine, yielding dephospho-CoA (dPCoA) and pyrophosphate. The chain is Phosphopantetheine adenylyltransferase from Citrifermentans bemidjiense (strain ATCC BAA-1014 / DSM 16622 / JCM 12645 / Bem) (Geobacter bemidjiensis).